Consider the following 830-residue polypeptide: Cadherin-16 (830 aa).

Positions 1–21 (MISARPWLLYLSVIQAFTTEA) are cleaved as a signal peptide. At 22 to 788 (QPAESLHTEV…MKGMPTKLSA (767 aa)) the chain is on the extracellular side. 6 Cadherin domains span residues 27 to 128 (LHTE…VPQF), 133 to 237 (YRAQ…SIVE), 244 to 338 (EPVH…APVC), 343 to 451 (PTVN…APEF), 457 to 566 (GPVT…PLKL), and 571 to 667 (YETS…VPAL). Asn-519, Asn-604, and Asn-724 each carry an N-linked (GlcNAc...) asparagine glycan. Residues 668-788 (TLSAGPSRHL…MKGMPTKLSA (121 aa)) form an ectodomain G region. A helical membrane pass occupies residues 789–809 (VGVLLGTLAAIGFILILVFTH). The Cytoplasmic segment spans residues 810–830 (LALARKDLDQPADSVPLKAAV). Ser-823 carries the phosphoserine modification.

In terms of tissue distribution, kidney specific.

Its subcellular location is the cell membrane. Its function is as follows. Cadherins are calcium-dependent cell adhesion proteins. They preferentially interact with themselves in a homophilic manner in connecting cells; cadherins may thus contribute to the sorting of heterogeneous cell types. This is Cadherin-16 (Cdh16) from Mus musculus (Mouse).